A 1464-amino-acid chain; its full sequence is Secretory phospholipase A2 receptor (1464 aa).

An N-terminal signal peptide occupies residues 1-22 (MLLSPSLLLPLLLLLGAPRGCA). Over 23–1398 (EGVAAALTPE…ELPEKGPSHS (1376 aa)) the chain is Extracellular. The region spanning 40 to 163 (KGIFVIQSES…GSGGGDICEY (124 aa)) is the Ricin B-type lectin domain. Disulfide bonds link cysteine 53/cysteine 66, cysteine 91/cysteine 108, cysteine 180/cysteine 206, cysteine 194/cysteine 221, cysteine 262/cysteine 356, cysteine 332/cysteine 348, cysteine 408/cysteine 503, cysteine 480/cysteine 495, cysteine 619/cysteine 636, cysteine 701/cysteine 798, cysteine 776/cysteine 790, cysteine 842/cysteine 939, cysteine 916/cysteine 931, cysteine 1069/cysteine 1089, cysteine 1211/cysteine 1225, cysteine 1282/cysteine 1378, and cysteine 1356/cysteine 1370. The N-linked (GlcNAc...) asparagine glycan is linked to asparagine 95. One can recognise a Fibronectin type-II domain in the interval 175 to 223 (AHGMPCMFPFQYNHQWHHECTREGREDDLLWCATTSRYERDEKWGFCPD). 8 consecutive C-type lectin domains span residues 240–357 (NSHI…YVCK), 387–504 (YNRN…YVCK), 524–645 (HGGF…MSLC), 675–799 (GLAS…WICK), 821–940 (YQDA…SICK), 967–1098 (FNYK…GFVC), 1123–1234 (YGNR…GAIC), and 1259–1379 (FKSN…FICK). An N-linked (GlcNAc...) asparagine glycan is attached at asparagine 456. The chain crosses the membrane as a helical span at residues 1399-1419 (IIPLAVVLTLIVIVAICTLSF). Over 1420 to 1464 (CIYKHNGGFFRRLAGFRNPYYPATNFSTVHLEENILISDLEKSDQ) the chain is Cytoplasmic. The Endocytosis signal motif lies at 1437-1443 (NPYYPAT).

Interacts with sPLA2-IB/PLA2G1B; this interaction mediates intracellular signaling as well as clearance of extracellular sPLA2-IB/PLA2G1B via endocytotic pathway. Interacts with sPLA2-X/PLA2G10; this interaction mediates sPLA2-X/PLA2G10 clearance and inactivation. The secretory phospholipase A2 receptor form may be produced by the action of metalloproteinases. It contains all extracellular domains and only lacks transmembrane and cytosolic regions. It is however unclear whether this form is produced by proteolytic cleavage as suggested by some experiments, or by alternative splicing.

Its subcellular location is the cell membrane. The protein localises to the secreted. In terms of biological role, receptor for secretory phospholipase A2 (sPLA2). Also able to bind to snake PA2-like toxins. Although its precise function remains unclear, binding of sPLA2 to its receptor participates in both positive and negative regulation of sPLA2 functions as well as clearance of sPLA2. Binding of sPLA2-IB/PLA2G1B induces various effects depending on the cell type, such as activation of the mitogen-activated protein kinase (MAPK) cascade to induce cell proliferation, the production of lipid mediators, selective release of arachidonic acid in bone marrow-derived mast cells. In neutrophils, binding of sPLA2-IB/PLA2G1B can activate p38 MAPK to stimulate elastase release and cell adhesion. May be involved in responses in pro-inflammatory cytokine productions during endotoxic shock. Also has endocytic properties and rapidly internalizes sPLA2 ligands, which is particularly important for the clearance of extracellular sPLA2s to protect their potent enzymatic activities. The soluble secretory phospholipase A2 receptor form is circulating and acts as a negative regulator of sPLA2 functions by blocking the biological functions of sPLA2-IB/PLA2G1B and sPLA2-X/PLA2G10. The protein is Secretory phospholipase A2 receptor (PLA2R1) of Pongo abelii (Sumatran orangutan).